Reading from the N-terminus, the 529-residue chain is Beta-glucosidase 11 (529 aa).

Positions 1-25 are cleaved as a signal peptide; it reads MAVAGAMVMSGALLLLHLLAFTCVA. A beta-D-glucoside is bound by residues Gln-54, His-157, and 202–203; that span reads NE. The active-site Proton donor is the Glu-203. A disulfide bridge links Cys-222 with Cys-230. Tyr-346 contacts a beta-D-glucoside. Asn-361 carries N-linked (GlcNAc...) asparagine glycosylation. Residue Glu-417 participates in a beta-D-glucoside binding. The active-site Nucleophile is the Glu-417. Residue Asn-425 is glycosylated (N-linked (GlcNAc...) asparagine). A beta-D-glucoside contacts are provided by residues Trp-466, 473–474, and Phe-482; that span reads EW.

Belongs to the glycosyl hydrolase 1 family.

The catalysed reaction is Hydrolysis of terminal, non-reducing beta-D-glucosyl residues with release of beta-D-glucose.. The sequence is that of Beta-glucosidase 11 (BGLU11) from Oryza sativa subsp. japonica (Rice).